Here is a 204-residue protein sequence, read N- to C-terminus: Thymidine kinase (204 aa).

ATP is bound by residues glycine 23–threonine 30 and aspartate 95–glutamine 98. Residue glutamate 96 is the Proton acceptor of the active site. Zn(2+)-binding residues include cysteine 152, cysteine 155, cysteine 184, and cysteine 187.

It belongs to the thymidine kinase family. In terms of assembly, homotetramer.

The protein resides in the cytoplasm. The catalysed reaction is thymidine + ATP = dTMP + ADP + H(+). The polypeptide is Thymidine kinase (Porphyromonas gingivalis (strain ATCC BAA-308 / W83)).